The sequence spans 111 residues: Iron-sulfur cluster assembly protein CyaY (111 aa).

The protein belongs to the frataxin family.

Involved in iron-sulfur (Fe-S) cluster assembly. May act as a regulator of Fe-S biogenesis. In Cupriavidus necator (strain ATCC 17699 / DSM 428 / KCTC 22496 / NCIMB 10442 / H16 / Stanier 337) (Ralstonia eutropha), this protein is Iron-sulfur cluster assembly protein CyaY.